We begin with the raw amino-acid sequence, 351 residues long: Dihydroorotate dehydrogenase (quinone) (351 aa).

FMN-binding positions include Ala-61 to Lys-65 and Thr-85. Substrate is bound at residue Lys-65. Position 110–114 (Asn-110–Phe-114) interacts with substrate. FMN-binding residues include Asn-139 and Asn-172. Asn-172 is a substrate binding site. The active-site Nucleophile is the Ser-175. Substrate is bound at residue Asn-177. The FMN site is built by Lys-217 and Thr-245. Residue Asn-246–Thr-247 coordinates substrate. FMN-binding positions include Gly-268, Gly-297, and Tyr-318–Thr-319.

The protein belongs to the dihydroorotate dehydrogenase family. Type 2 subfamily. Monomer. The cofactor is FMN.

Its subcellular location is the cell membrane. The catalysed reaction is (S)-dihydroorotate + a quinone = orotate + a quinol. The protein operates within pyrimidine metabolism; UMP biosynthesis via de novo pathway; orotate from (S)-dihydroorotate (quinone route): step 1/1. Functionally, catalyzes the conversion of dihydroorotate to orotate with quinone as electron acceptor. The chain is Dihydroorotate dehydrogenase (quinone) from Xylella fastidiosa (strain 9a5c).